A 99-amino-acid chain; its full sequence is Integration host factor subunit alpha (99 aa).

Residues 49 to 71 (FGNFDLRDKNQRPGRNPKTGEDI) are disordered.

It belongs to the bacterial histone-like protein family. As to quaternary structure, heterodimer of an alpha and a beta chain.

Functionally, this protein is one of the two subunits of integration host factor, a specific DNA-binding protein that functions in genetic recombination as well as in transcriptional and translational control. The polypeptide is Integration host factor subunit alpha (Shewanella denitrificans (strain OS217 / ATCC BAA-1090 / DSM 15013)).